The primary structure comprises 107 residues: Protein KleE (107 aa).

The sequence is that of Protein KleE (kleE) from Escherichia coli.